A 440-amino-acid chain; its full sequence is GTPase Der (440 aa).

2 consecutive EngA-type G domains span residues P4–D169 and I178–A353. GTP is bound by residues G10–S17, D57–I61, N120–D123, G184–S191, D231–I235, and N296–D299. Residues M354–E438 form the KH-like domain.

It belongs to the TRAFAC class TrmE-Era-EngA-EngB-Septin-like GTPase superfamily. EngA (Der) GTPase family. As to quaternary structure, associates with the 50S ribosomal subunit.

Its function is as follows. GTPase that plays an essential role in the late steps of ribosome biogenesis. This Acetivibrio thermocellus (strain ATCC 27405 / DSM 1237 / JCM 9322 / NBRC 103400 / NCIMB 10682 / NRRL B-4536 / VPI 7372) (Clostridium thermocellum) protein is GTPase Der.